Reading from the N-terminus, the 99-residue chain is Nucleoid-associated protein SSA_0326 (99 aa).

Low complexity predominate over residues 1 to 15; sequence MMNMQSMMKQAQKLQ. Residues 1–23 form a disordered region; sequence MMNMQSMMKQAQKLQKQMEKGQA.

It belongs to the YbaB/EbfC family. As to quaternary structure, homodimer.

It localises to the cytoplasm. The protein resides in the nucleoid. Binds to DNA and alters its conformation. May be involved in regulation of gene expression, nucleoid organization and DNA protection. This Streptococcus sanguinis (strain SK36) protein is Nucleoid-associated protein SSA_0326.